Consider the following 302-residue polypeptide: Potassium/proton antiporter CemA (302 aa).

Helical transmembrane passes span 55–75 (VFVS…ITFL), 187–207 (FVSF…IIIL), 225–247 (FLLI…ELFL), and 262–282 (FIFL…KYWI).

The protein belongs to the CemA family.

Its subcellular location is the plastid. The protein resides in the chloroplast inner membrane. The catalysed reaction is K(+)(in) + H(+)(out) = K(+)(out) + H(+)(in). Contributes to K(+)/H(+) antiport activity by supporting proton efflux to control proton extrusion and homeostasis in chloroplasts in a light-dependent manner to modulate photosynthesis. Prevents excessive induction of non-photochemical quenching (NPQ) under continuous-light conditions. Indirectly promotes efficient inorganic carbon uptake into chloroplasts. The protein is Potassium/proton antiporter CemA of Tupiella akineta (Green alga).